A 34-amino-acid chain; its full sequence is MVNWQVIGQLVSTGAIMLLGPAIIILLALKKGNL.

The helical transmembrane segment at 6-26 threads the bilayer; the sequence is VIGQLVSTGAIMLLGPAIIIL.

The protein belongs to the Psb30/Ycf12 family. PSII is composed of 1 copy each of membrane proteins PsbA, PsbB, PsbC, PsbD, PsbE, PsbF, PsbH, PsbI, PsbJ, PsbK, PsbL, PsbM, PsbT, PsbX, PsbY, PsbZ, Psb30/Ycf12, peripheral proteins of the oxygen-evolving complex and a large number of cofactors. It forms dimeric complexes.

It is found in the plastid. It localises to the chloroplast thylakoid membrane. In terms of biological role, a core subunit of photosystem II (PSII), probably helps stabilize the reaction center. The sequence is that of Photosystem II reaction center protein Psb30 from Thalassiosira pseudonana (Marine diatom).